The primary structure comprises 83 residues: U25-theraphotoxin-Cg1a (83 aa).

The signal sequence occupies residues 1 to 23 (MRFHTLLFLSFLLLVSCALICTA). Positions 24-48 (QHPGLEKSGMFHENVGKGQHIEEKR) are excised as a propeptide. Cystine bridges form between cysteine 50-cysteine 66, cysteine 57-cysteine 71, and cysteine 65-cysteine 81.

This sequence belongs to the neurotoxin 07 (Beta/delta-agtx) family. 03 (aga-4) subfamily. JZTX sub-subfamily. In terms of tissue distribution, expressed by the venom gland.

Its subcellular location is the secreted. Inhibits TTX-sensitive sodium currents in rat dorsal root ganglion (DRG) neurons. In Chilobrachys guangxiensis (Chinese earth tiger tarantula), this protein is U25-theraphotoxin-Cg1a.